The chain runs to 411 residues: CCA-adding enzyme (411 aa).

Residues Gly-8 and Arg-11 each contribute to the ATP site. The CTP site is built by Gly-8 and Arg-11. Mg(2+)-binding residues include Glu-21 and Asp-23. Residues Arg-91, Arg-137, and Arg-140 each contribute to the ATP site. CTP-binding residues include Arg-91, Arg-137, and Arg-140. One can recognise an HD domain in the interval 227-328 (LGNQTMTRLS…MTIFQAFDCW (102 aa)).

Belongs to the tRNA nucleotidyltransferase/poly(A) polymerase family. Bacterial CCA-adding enzyme type 2 subfamily. Mg(2+) serves as cofactor.

It catalyses the reaction a tRNA precursor + 2 CTP + ATP = a tRNA with a 3' CCA end + 3 diphosphate. The catalysed reaction is a tRNA with a 3' CCA end + 2 CTP + ATP = a tRNA with a 3' CCACCA end + 3 diphosphate. Its function is as follows. Catalyzes the addition and repair of the essential 3'-terminal CCA sequence in tRNAs without using a nucleic acid template. Adds these three nucleotides in the order of C, C, and A to the tRNA nucleotide-73, using CTP and ATP as substrates and producing inorganic pyrophosphate. tRNA 3'-terminal CCA addition is required both for tRNA processing and repair. Also involved in tRNA surveillance by mediating tandem CCA addition to generate a CCACCA at the 3' terminus of unstable tRNAs. While stable tRNAs receive only 3'-terminal CCA, unstable tRNAs are marked with CCACCA and rapidly degraded. The sequence is that of CCA-adding enzyme from Blochmanniella floridana.